The chain runs to 102 residues: Vacuolar ATPase assembly integral membrane protein VMA21 homolog (102 aa).

Residues 1-33 (MTTSSSSEPSTMATLFPNFRDQEVQSAVKNLLT) lie on the Cytoplasmic side of the membrane. A helical membrane pass occupies residues 34-54 (YSLVILIVPLASMFLLKQFFF). The Lumenal portion of the chain corresponds to 55–67 (EGLLGVSANDALT). The helical transmembrane segment at 68–88 (YSAIIAVVLVHVVLGIWLFAA) threads the bilayer. The Cytoplasmic segment spans residues 89–102 (TKQEDRKKRENKQD).

This sequence belongs to the VMA21 family.

The protein resides in the endoplasmic reticulum membrane. It is found in the endoplasmic reticulum-Golgi intermediate compartment membrane. Its subcellular location is the cytoplasmic vesicle. It localises to the COPII-coated vesicle membrane. Functionally, required for the assembly of the V0 complex of the vacuolar ATPase (V-ATPase) in the endoplasmic reticulum. This chain is Vacuolar ATPase assembly integral membrane protein VMA21 homolog, found in Caenorhabditis elegans.